We begin with the raw amino-acid sequence, 379 residues long: F-box protein At1g67340 (379 aa).

An F-box domain is found at 41–92 (ADLLDSIPDDLVISILCKLGSTSRCPADFINVLLTCKRLKGLAMNPIVLSRL). Residues H304, C307, C320, C323, C329, C333, H342, and C346 each coordinate Zn(2+). The segment at 304-346 (HAGCGRPETRKHEFRRCSVCGVVNYCSRACQALDWKLRHKMDC) adopts an MYND-type; atypical zinc-finger fold. The tract at residues 358–379 (GGEGNVQIDGNGNGDNVLLPMS) is disordered.

As to quaternary structure, part of a SCF (ASK-cullin-F-box) protein ligase complex. Interacts with SKP1A/ASK1, SKP1B/ASK2, ASK4, ASK11 and ASK13.

The protein localises to the nucleus. Its pathway is protein modification; protein ubiquitination. Its function is as follows. Component of SCF(ASK-cullin-F-box) E3 ubiquitin ligase complexes, which may mediate the ubiquitination and subsequent proteasomal degradation of target proteins. This Arabidopsis thaliana (Mouse-ear cress) protein is F-box protein At1g67340.